The chain runs to 199 residues: Ribonuclease P protein subunit p25 (199 aa).

A compositionally biased stretch (basic and acidic residues) spans 1–11; the sequence is MENFRKVRSEE. Disordered regions lie at residues 1 to 31 and 146 to 199; these read MENFRKVRSEEAPAGDGDEGGSPSSGPFADL and PRQL…DRTA. The residue at position 172 (serine 172) is a Phosphoserine. The span at 190-199 shows a compositional bias: acidic residues; that stretch reads PEAENEDRTA.

This sequence belongs to the histone-like Alba family. As to quaternary structure, component of nuclear RNase P and RNase MRP ribonucleoproteins. RNase P consists of a catalytic RNA moiety and 10 different protein chains; POP1, POP4, POP5, POP7, RPP14, RPP21, RPP25, RPP30, RPP38 and RPP40. Within the RNase P complex, POP1, POP7 and RPP25 form the 'finger' subcomplex, POP5, RPP14, RPP40 and homodimeric RPP30 form the 'palm' subcomplex, and RPP21, POP4 and RPP38 form the 'wrist' subcomplex. All subunits of the RNase P complex interact with the catalytic RNA. Several subunits of RNase P are also part of the RNase MRP complex. RNase MRP consists of a catalytic RNA moiety and about 8 protein subunits; POP1, POP7, RPP25, RPP30, RPP38, RPP40 and possibly also POP4 and POP5. POP7 forms a heterodimer with RPP25 that binds to the P3 stem loop of the catalytic RNA.

It is found in the nucleus. Its subcellular location is the nucleolus. Functionally, component of ribonuclease P, a ribonucleoprotein complex that generates mature tRNA molecules by cleaving their 5'-ends. Also a component of the MRP ribonuclease complex, which cleaves pre-rRNA sequences. In Rattus norvegicus (Rat), this protein is Ribonuclease P protein subunit p25 (Rpp25).